The sequence spans 394 residues: Na(+)/H(+) antiporter NhaA (394 aa).

The next 11 helical transmembrane spans lie at 17–37 (ILLM…LAGV), 59–79 (LLLW…GLEV), 95–115 (SLPS…YLAF), 124–144 (VGWA…MALL), 154–174 (VFLL…IALF), 177–197 (TDLS…MVAL), 213–233 (FILW…GVII), 261–281 (FMIL…NMTL), 287–307 (PITL…VLLF), 328–348 (IIPV…IASL), and 363–383 (LGIL…LAKV).

It belongs to the NhaA Na(+)/H(+) (TC 2.A.33) antiporter family.

Its subcellular location is the cell inner membrane. The catalysed reaction is Na(+)(in) + 2 H(+)(out) = Na(+)(out) + 2 H(+)(in). In terms of biological role, na(+)/H(+) antiporter that extrudes sodium in exchange for external protons. The protein is Na(+)/H(+) antiporter NhaA of Shewanella frigidimarina (strain NCIMB 400).